A 192-amino-acid chain; its full sequence is MPSILERDQIAAVLVSASRDKTPAGLRDHAILQLLATYGLRSGEIRNMRIEDIDWRTETIRVRHSKTQAYTLLPLTEPVGEAILVYLRSGRPATDARELFVRTRAPYRKLDKLYSMVRRRLRDAGVKPRGKRGPHIFRHARATELLRAAVPQKIIGELLGHRSIASTAPYLKLATEDLRAIALDLPGTEVSA.

Residues 1 to 183 form the Tyr recombinase domain; sequence MPSILERDQI…ATEDLRAIAL (183 aa). Active-site residues include Arg-41, Lys-66, His-135, Arg-138, and His-161. Tyr-170 acts as the O-(3'-phospho-DNA)-tyrosine intermediate in catalysis.

Belongs to the 'phage' integrase family.

The sequence is that of Putative integrase/recombinase y4gC from Sinorhizobium fredii (strain NBRC 101917 / NGR234).